The following is a 431-amino-acid chain: Indole diterpene prenyltransferase nodD1 (431 aa).

85 to 86 contributes to the L-tryptophan binding site; it reads FI. Residues Arg-107, Lys-194, Arg-268, Lys-270, Tyr-272, and Tyr-353 each contribute to the substrate site.

Belongs to the tryptophan dimethylallyltransferase family.

The protein operates within secondary metabolite biosynthesis. Indole diterpene prenyltransferase; part of the gene cluster that mediates the biosynthesis of the indole diterpenes nodulisporic acids (NA). Nodulisporic acid A (NAA) and its chemically modified derivatives are of particular significance because of their highly potent insecticidal activity against blood-feeding arthropods and lack of observable adverse effects on mammals, in particular the tremogenicity associated with the paspaline-derived IDTs is not observed. The geranylgeranyl diphosphate (GGPP) synthase ggs1, localized outside of the cluster, is proposed to catalyze the first step in nodulisporic acid biosynthesis via conversion of farnesyl pyrophosphate and isopentyl pyrophosphate into geranylgeranyl pyrophosphate (GGPP). Condensation of indole-3-glycerol phosphate with GGPP by the prenyl transferase nodC then forms 3-geranylgeranylindole (3-GGI). Epoxidation by the FAD-dependent monooxygenase nodM leads to a single-epoxidized-GGI that is substrate of the terpene cyclase nodB for cyclization to yield emindole SB. The terminal methyl carbon, C28, of emindole SB is then oxidized by the cytochrome P450 monooxygenase nodW to produce nodulisporic acid F (NAF), the pentacyclic core of NAA. NAF is converted to nodulisporic acid E (NAE) via prenylation. This step is probably performed by one of the indole diterpene prenyltransferases nodD1 or nodD2. Several oxidation steps performed by the FAD-linked oxidoreductase nodO and one of the cytochrome P450 monooxygenase nodR, nodX or nodZ further convert NAE to nodulisporic acid D (NAD). NAD is substrate of cytochrome P450 monooxygenase nodJ to produce the precursor of nodulisporic acid C (NAC), converted to NAC by one of the indole diterpene prenyltransferases nodD1 or nodD2. The FAD-dependent monooxygenase nodY2 then oxidizes NAC to nodulisporic acid B (NAB). Finally NAB is converted to NAA by one of the cytochrome P450 monooxygenases nodR, nodX or nodZ. This Hypoxylon pulicicidum protein is Indole diterpene prenyltransferase nodD1.